The chain runs to 159 residues: Mitotic-spindle organizing protein 2 (159 aa).

The disordered stretch occupies residues L87–P159. Positions P91–E105 are enriched in polar residues. The residue at position 111 (R111) is an Omega-N-methylarginine. A Phosphoserine modification is found at S153.

Belongs to the MOZART2 family. As to quaternary structure, associates with the gamma-tubulin ring complex (gTuRC) consisting of TUBGCP2, TUBGCP3, TUBGCP4, TUBGCP5 and TUBGCP6 and gamma-tubulin TUBG1 or TUBG2; within the complex, interacts with TUBGCP2; the interaction plays a role in gTuRC activation.

The protein resides in the cytoplasm. It localises to the cytoskeleton. Its subcellular location is the microtubule organizing center. It is found in the centrosome. The protein localises to the spindle. Functionally, required for the recruitment and the assembly of the gamma-tubulin ring complex (gTuRC) at the centrosome. The gTuRC regulates the minus-end nucleation of alpha-beta tubulin heterodimers that grow into microtubule protafilaments, a critical step in centrosome duplication and spindle formation. The polypeptide is Mitotic-spindle organizing protein 2 (Mzt2) (Mus musculus (Mouse)).